The sequence spans 466 residues: 3-isopropylmalate dehydratase large subunit (466 aa).

[4Fe-4S] cluster-binding residues include cysteine 347, cysteine 407, and cysteine 410.

The protein belongs to the aconitase/IPM isomerase family. LeuC type 1 subfamily. Heterodimer of LeuC and LeuD. It depends on [4Fe-4S] cluster as a cofactor.

It carries out the reaction (2R,3S)-3-isopropylmalate = (2S)-2-isopropylmalate. Its pathway is amino-acid biosynthesis; L-leucine biosynthesis; L-leucine from 3-methyl-2-oxobutanoate: step 2/4. Its function is as follows. Catalyzes the isomerization between 2-isopropylmalate and 3-isopropylmalate, via the formation of 2-isopropylmaleate. The protein is 3-isopropylmalate dehydratase large subunit of Escherichia coli O127:H6 (strain E2348/69 / EPEC).